The sequence spans 252 residues: 5-oxoprolinase subunit A (252 aa).

This sequence belongs to the LamB/PxpA family. Forms a complex composed of PxpA, PxpB and PxpC.

It carries out the reaction 5-oxo-L-proline + ATP + 2 H2O = L-glutamate + ADP + phosphate + H(+). Catalyzes the cleavage of 5-oxoproline to form L-glutamate coupled to the hydrolysis of ATP to ADP and inorganic phosphate. This is 5-oxoprolinase subunit A from Mycobacterium marinum (strain ATCC BAA-535 / M).